The chain runs to 440 residues: Glycerol-3-phosphate dehydrogenase [NAD(+)] 2, mitochondrial (440 aa).

The N-terminal 16 residues, Met1–Thr16, are a transit peptide targeting the mitochondrion. 3 positions are modified to phosphoserine: Ser70, Ser72, and Ser75. NAD(+) is bound by residues Gly90–Gly95, Phe122, and Phe178. Lys201 provides a ligand contact to substrate. Ala234 provides a ligand contact to NAD(+). Lys294 (proton acceptor) is an active-site residue. NAD(+) contacts are provided by Arg359 and Gln388. Arg359 to Asn360 contributes to the substrate binding site.

Belongs to the NAD-dependent glycerol-3-phosphate dehydrogenase family.

It localises to the cytoplasm. Its subcellular location is the mitochondrion. The enzyme catalyses sn-glycerol 3-phosphate + NAD(+) = dihydroxyacetone phosphate + NADH + H(+). Catalyzes the production of glycerol under anaerobic growth conditions. Glycerol production serves as a redox sink by consuming the excess cytosolic NADH during anaerobic metabolism. This chain is Glycerol-3-phosphate dehydrogenase [NAD(+)] 2, mitochondrial, found in Saccharomyces cerevisiae (strain ATCC 204508 / S288c) (Baker's yeast).